The chain runs to 324 residues: Formimidoylglutamase (324 aa).

Mn(2+)-binding residues include H124, D153, H155, D157, D245, and D247.

The protein belongs to the arginase family. The cofactor is Mn(2+).

It catalyses the reaction N-formimidoyl-L-glutamate + H2O = formamide + L-glutamate. Its pathway is amino-acid degradation; L-histidine degradation into L-glutamate; L-glutamate from N-formimidoyl-L-glutamate (hydrolase route): step 1/1. Its function is as follows. Catalyzes the conversion of N-formimidoyl-L-glutamate to L-glutamate and formamide. This is Formimidoylglutamase from Hahella chejuensis (strain KCTC 2396).